The primary structure comprises 271 residues: MSFDINWSTLESDNRLNDLIRKHLNSYLQNTQLPSYVSNLRVLDFDLGKVGPAITLKEITDPLDEFYDSIREEADQETEENNDNKEDSEHICPDRTIANHEGPKDDFEAPVVMPSPNDIQFLLEVEYKGDLLVTIGADLVLNYPVEKFMTLPVKLSISDIGLHSLCIVACLSKQLFLSFLCDVSDPALDDNQTVLDPKGPILAATKPLERISIVRSMKIETEIGEQYQGQGSVLRSVGELEQFLFTIFKDFLRKELAWPSWINLDFNDGDE.

Positions 1–267 (MSFDINWSTL…WPSWINLDFN (267 aa)) constitute an SMP-LTD domain. Lys49 participates in a covalent cross-link: Glycyl lysine isopeptide (Lys-Gly) (interchain with G-Cter in ubiquitin).

It belongs to the MDM12 family. Component of the ER-mitochondria encounter structure (ERMES) or MDM complex, composed of MMM1, MDM10, MDM12 and MDM34. An MMM1 homodimer associates with one molecule of MDM12 on each side in a pairwise head-to-tail manner, and the SMP-LTD domains of MMM1 and MDM12 generate a continuous hydrophobic tunnel for phospholipid trafficking. Interacts with PUF3.

Its subcellular location is the mitochondrion outer membrane. The protein localises to the endoplasmic reticulum membrane. In terms of biological role, component of the ERMES/MDM complex, which serves as a molecular tether to connect the endoplasmic reticulum (ER) and mitochondria. Components of this complex are involved in the control of mitochondrial shape and protein biogenesis, and function in nonvesicular lipid trafficking between the ER and mitochondria. MDM12 is required for the interaction of the ER-resident membrane protein MMM1 and the outer mitochondrial membrane-resident beta-barrel protein MDM10. The MDM12-MMM1 subcomplex functions in the major beta-barrel assembly pathway that is responsible for biogenesis of all mitochondrial outer membrane beta-barrel proteins, and acts in a late step after the SAM complex. The MDM10-MDM12-MMM1 subcomplex further acts in the TOM40-specific pathway after the action of the MDM12-MMM1 complex. Essential for establishing and maintaining the structure of mitochondria and maintenance of mtDNA nucleoids. The sequence is that of Mitochondrial distribution and morphology protein 12 from Saccharomyces cerevisiae (strain AWRI1631) (Baker's yeast).